The chain runs to 64 residues: Large ribosomal subunit protein uL29 (64 aa).

This sequence belongs to the universal ribosomal protein uL29 family.

This is Large ribosomal subunit protein uL29 from Nitratiruptor sp. (strain SB155-2).